Consider the following 270-residue polypeptide: Tryptophan synthase alpha chain (270 aa).

Catalysis depends on proton acceptor residues glutamate 49 and aspartate 60.

Belongs to the TrpA family. As to quaternary structure, tetramer of two alpha and two beta chains.

It catalyses the reaction (1S,2R)-1-C-(indol-3-yl)glycerol 3-phosphate + L-serine = D-glyceraldehyde 3-phosphate + L-tryptophan + H2O. It functions in the pathway amino-acid biosynthesis; L-tryptophan biosynthesis; L-tryptophan from chorismate: step 5/5. In terms of biological role, the alpha subunit is responsible for the aldol cleavage of indoleglycerol phosphate to indole and glyceraldehyde 3-phosphate. In Marinobacter nauticus (strain ATCC 700491 / DSM 11845 / VT8) (Marinobacter aquaeolei), this protein is Tryptophan synthase alpha chain.